Here is a 180-residue protein sequence, read N- to C-terminus: Large ribosomal subunit protein uL5 (180 aa).

This sequence belongs to the universal ribosomal protein uL5 family. In terms of assembly, part of the 50S ribosomal subunit; part of the 5S rRNA/L5/L18/L25 subcomplex. Contacts the 5S rRNA and the P site tRNA. Forms a bridge to the 30S subunit in the 70S ribosome.

Its function is as follows. This is one of the proteins that bind and probably mediate the attachment of the 5S RNA into the large ribosomal subunit, where it forms part of the central protuberance. In the 70S ribosome it contacts protein S13 of the 30S subunit (bridge B1b), connecting the 2 subunits; this bridge is implicated in subunit movement. Contacts the P site tRNA; the 5S rRNA and some of its associated proteins might help stabilize positioning of ribosome-bound tRNAs. The protein is Large ribosomal subunit protein uL5 of Lactiplantibacillus plantarum (strain ATCC BAA-793 / NCIMB 8826 / WCFS1) (Lactobacillus plantarum).